Here is a 98-residue protein sequence, read N- to C-terminus: MTAIYLNLTMAFSLALMGVLVYRSHLMSTLLCLEGMMLSLFILMTLLITHYRMSSISMLPLTLLVFSACEAAIGLALLVKMFTSYGNDHVQNLNLLKC.

3 helical membrane-spanning segments follow: residues 1–21 (MTAIYLNLTMAFSLALMGVLV), 29–49 (TLLCLEGMMLSLFILMTLLIT), and 59–79 (LPLTLLVFSACEAAIGLALLV).

This sequence belongs to the complex I subunit 4L family. As to quaternary structure, core subunit of respiratory chain NADH dehydrogenase (Complex I) which is composed of 45 different subunits.

The protein localises to the mitochondrion inner membrane. It carries out the reaction a ubiquinone + NADH + 5 H(+)(in) = a ubiquinol + NAD(+) + 4 H(+)(out). In terms of biological role, core subunit of the mitochondrial membrane respiratory chain NADH dehydrogenase (Complex I) which catalyzes electron transfer from NADH through the respiratory chain, using ubiquinone as an electron acceptor. Part of the enzyme membrane arm which is embedded in the lipid bilayer and involved in proton translocation. The chain is NADH-ubiquinone oxidoreductase chain 4L (MT-ND4L) from Notoryctes typhlops (Southern marsupial mole).